Consider the following 95-residue polypeptide: Large ribosomal subunit protein bL21 (95 aa).

The protein belongs to the bacterial ribosomal protein bL21 family. Part of the 50S ribosomal subunit. Contacts protein L20.

Its function is as follows. This protein binds to 23S rRNA in the presence of protein L20. The polypeptide is Large ribosomal subunit protein bL21 (Chlorobaculum tepidum (strain ATCC 49652 / DSM 12025 / NBRC 103806 / TLS) (Chlorobium tepidum)).